We begin with the raw amino-acid sequence, 209 residues long: LexA repressor (209 aa).

The segment at residues 29–49 (VREIGSAIGLSSTSTVHGHID) is a DNA-binding region (H-T-H motif). Active-site for autocatalytic cleavage activity residues include Ser-130 and Lys-168.

Belongs to the peptidase S24 family. In terms of assembly, homodimer.

The enzyme catalyses Hydrolysis of Ala-|-Gly bond in repressor LexA.. In terms of biological role, represses a number of genes involved in the response to DNA damage (SOS response), including recA and lexA. In the presence of single-stranded DNA, RecA interacts with LexA causing an autocatalytic cleavage which disrupts the DNA-binding part of LexA, leading to derepression of the SOS regulon and eventually DNA repair. The polypeptide is LexA repressor (Pediococcus pentosaceus (strain ATCC 25745 / CCUG 21536 / LMG 10740 / 183-1w)).